A 211-amino-acid polypeptide reads, in one-letter code: MRKYIKIGVAGPVGAGKTALIERLTREIASKYSVAVITNDIYTQEDAEFLTKNSLLPPERIMGVETGGCPHTAIREDASMNLEAVDEMVARFPEVELIFIESGGDNLSATFSPDLADVTIFVIDVAQGEKIPRKGGPGISRSDLLVINKTDLAPFVGADLSVMERDARRMRNGQPFIFTNLMKNENLDGVIGWIEKYALLKNIEDPASLVR.

Residue 11-18 coordinates GTP; that stretch reads GPVGAGKT.

The protein belongs to the SIMIBI class G3E GTPase family. UreG subfamily. Homodimer. UreD, UreF and UreG form a complex that acts as a GTP-hydrolysis-dependent molecular chaperone, activating the urease apoprotein by helping to assemble the nickel containing metallocenter of UreC. The UreE protein probably delivers the nickel.

Its subcellular location is the cytoplasm. Its function is as follows. Facilitates the functional incorporation of the urease nickel metallocenter. This process requires GTP hydrolysis, probably effectuated by UreG. This chain is Urease accessory protein UreG, found in Actinobacillus pleuropneumoniae (Haemophilus pleuropneumoniae).